A 99-amino-acid chain; its full sequence is UPF0213 protein PC1_0597 (99 aa).

The GIY-YIG domain maps to 8–83 (PQWYLYILRT…KQLSKNQKER (76 aa)).

It belongs to the UPF0213 family.

This is UPF0213 protein PC1_0597 from Pectobacterium carotovorum subsp. carotovorum (strain PC1).